We begin with the raw amino-acid sequence, 678 residues long: uncharacterized protein (678 aa).

Disordered stretches follow at residues 123 to 156 (TPLSEDRKPTSNNEEEDDADEAKSSNADSSTDSV) and 381 to 417 (TETTETEGVDKEDSDKASSVQGNEDEVPDTASETEHS).

It is found in the cytoplasm. This is an uncharacterized protein from Schizosaccharomyces pombe (strain 972 / ATCC 24843) (Fission yeast).